The sequence spans 145 residues: Basic phospholipase A2 PC14 (145 aa).

Positions 1-21 are cleaved as a signal peptide; the sequence is MYPAHLLLLLAVCVSLLGASA. Residues 22–27 constitute a propeptide that is removed on maturation; sequence IPPLPL. Intrachain disulfides connect Cys38-Cys98, Cys54-Cys144, Cys56-Cys72, Cys71-Cys125, Cys78-Cys118, Cys87-Cys111, and Cys105-Cys116. Positions 55, 57, and 59 each coordinate Ca(2+). The active site involves His75. Asp76 is a binding site for Ca(2+). The active site involves Asp119.

It belongs to the phospholipase A2 family. Group I subfamily. D49 sub-subfamily. The cofactor is Ca(2+).

The protein resides in the secreted. The enzyme catalyses a 1,2-diacyl-sn-glycero-3-phosphocholine + H2O = a 1-acyl-sn-glycero-3-phosphocholine + a fatty acid + H(+). PLA2 catalyzes the calcium-dependent hydrolysis of the 2-acyl groups in 3-sn-phosphoglycerides. This is Basic phospholipase A2 PC14 from Laticauda laticaudata (Blue-ringed sea krait).